The following is a 273-amino-acid chain: 4-hydroxy-tetrahydrodipicolinate reductase (273 aa).

NAD(+) is bound by residues 12–17 and Glu38; that span reads GAGGRM. An NADP(+)-binding site is contributed by Arg39. NAD(+) is bound by residues 102–104 and 126–129; these read GTT and AANF. The Proton donor/acceptor role is filled by His159. Residue His160 coordinates (S)-2,3,4,5-tetrahydrodipicolinate. Catalysis depends on Lys163, which acts as the Proton donor. 169-170 lines the (S)-2,3,4,5-tetrahydrodipicolinate pocket; it reads GT.

It belongs to the DapB family. Homotetramer.

It localises to the cytoplasm. It carries out the reaction (S)-2,3,4,5-tetrahydrodipicolinate + NAD(+) + H2O = (2S,4S)-4-hydroxy-2,3,4,5-tetrahydrodipicolinate + NADH + H(+). The catalysed reaction is (S)-2,3,4,5-tetrahydrodipicolinate + NADP(+) + H2O = (2S,4S)-4-hydroxy-2,3,4,5-tetrahydrodipicolinate + NADPH + H(+). The protein operates within amino-acid biosynthesis; L-lysine biosynthesis via DAP pathway; (S)-tetrahydrodipicolinate from L-aspartate: step 4/4. Catalyzes the conversion of 4-hydroxy-tetrahydrodipicolinate (HTPA) to tetrahydrodipicolinate. The chain is 4-hydroxy-tetrahydrodipicolinate reductase from Salmonella arizonae (strain ATCC BAA-731 / CDC346-86 / RSK2980).